The sequence spans 457 residues: UDP-N-acetylmuramoyl-tripeptide--D-alanyl-D-alanine ligase (457 aa).

109-115 serves as a coordination point for ATP; the sequence is GSSGKTT.

Belongs to the MurCDEF family. MurF subfamily.

It is found in the cytoplasm. The catalysed reaction is D-alanyl-D-alanine + UDP-N-acetyl-alpha-D-muramoyl-L-alanyl-gamma-D-glutamyl-meso-2,6-diaminopimelate + ATP = UDP-N-acetyl-alpha-D-muramoyl-L-alanyl-gamma-D-glutamyl-meso-2,6-diaminopimeloyl-D-alanyl-D-alanine + ADP + phosphate + H(+). Its pathway is cell wall biogenesis; peptidoglycan biosynthesis. Involved in cell wall formation. Catalyzes the final step in the synthesis of UDP-N-acetylmuramoyl-pentapeptide, the precursor of murein. The polypeptide is UDP-N-acetylmuramoyl-tripeptide--D-alanyl-D-alanine ligase (Haemophilus influenzae (strain ATCC 51907 / DSM 11121 / KW20 / Rd)).